The sequence spans 181 residues: ECF RNA polymerase sigma factor EcfG (181 aa).

The sigma-70 factor domain-2 stretch occupies residues V15–R77. The sigma-70 factor domain-4 stretch occupies residues E103–L155.

It belongs to the sigma-70 factor family. ECF subfamily.

Its function is as follows. Sigma factors are initiation factors that promote the attachment of RNA polymerase to specific initiation sites and are then released. Regulates expression of hpnP under a variety of stresses, including high temperature, pH stress, and presence of nonionic osmolytes. The chain is ECF RNA polymerase sigma factor EcfG from Rhodopseudomonas palustris (strain TIE-1).